We begin with the raw amino-acid sequence, 238 residues long: CASP-like protein 2BC2 (238 aa).

Residues 1–66 are Cytoplasmic-facing; sequence MPSSTYPRRR…FHQKVAVEKR (66 aa). A helical transmembrane segment spans residues 67–87; that stretch reads LKIGEVILRFAMIALALVAAV. The Extracellular segment spans residues 88–111; sequence RVGTDTQTRTIFTIEKKAKYSDMK. The chain crosses the membrane as a helical span at residues 112 to 132; that stretch reads ALVFLVVMNGIVASYSLLQGL. At 133-148 the chain is on the cytoplasmic side; it reads RCVLSIYTQSPLTSKP. A helical membrane pass occupies residues 149–169; sequence LAWLIFALDQTMAYFSLAAAA. Residues 170 to 200 are Extracellular-facing; it reads AAAESAYLAERGQTEFQWMKVCIFYEKFCHQ. The helical transmembrane segment at 201-221 threads the bilayer; the sequence is IGEGLVSTFLVSLSMATVSGM. The Cytoplasmic portion of the chain corresponds to 222–238; it reads SAYHLFRLYGSKGKSIQ.

Belongs to the Casparian strip membrane proteins (CASP) family. As to quaternary structure, homodimer and heterodimers.

The protein localises to the cell membrane. The protein is CASP-like protein 2BC2 of Picea sitchensis (Sitka spruce).